We begin with the raw amino-acid sequence, 250 residues long: Lymphotoxin-beta (250 aa).

Residues 1–26 (MGAPGLETRAGGPNGKSYLLLASVGA) lie on the Cytoplasmic side of the membrane. Residues 27–47 (AVLGTLLLSVPITVLTVLALM) traverse the membrane as a helical; Signal-anchor for type II membrane protein segment. Topologically, residues 48–250 (PQEQGGQVAD…KTFFGAVMVG (203 aa)) are extracellular. A THD domain is found at 87–249 (PAAHLIGIAK…GKTFFGAVMV (163 aa)). A glycan (N-linked (GlcNAc...) asparagine) is linked at asparagine 228.

This sequence belongs to the tumor necrosis factor family. As to quaternary structure, heterotrimer of either two LTB and one LTA subunits or (less prevalent) two LTA and one LTB subunits.

The protein resides in the membrane. Cytokine that binds to LTBR/TNFRSF3. May play a specific role in immune response regulation. Provides the membrane anchor for the attachment of the heterotrimeric complex to the cell surface. This chain is Lymphotoxin-beta (LTB), found in Notamacropus eugenii (Tammar wallaby).